The following is a 404-amino-acid chain: Argininosuccinate synthase (404 aa).

Residues 12-20 and alanine 40 each bind ATP; that span reads AYSGGLDTS. 2 residues coordinate L-citrulline: tyrosine 92 and serine 97. Glycine 122 contacts ATP. Residues threonine 124, asparagine 128, and aspartate 129 each coordinate L-aspartate. Residue asparagine 128 participates in L-citrulline binding. Residues arginine 132, serine 181, serine 190, glutamate 266, and tyrosine 278 each coordinate L-citrulline.

It belongs to the argininosuccinate synthase family. Type 1 subfamily. In terms of assembly, homotetramer.

The protein resides in the cytoplasm. The catalysed reaction is L-citrulline + L-aspartate + ATP = 2-(N(omega)-L-arginino)succinate + AMP + diphosphate + H(+). It functions in the pathway amino-acid biosynthesis; L-arginine biosynthesis; L-arginine from L-ornithine and carbamoyl phosphate: step 2/3. The polypeptide is Argininosuccinate synthase (Erwinia tasmaniensis (strain DSM 17950 / CFBP 7177 / CIP 109463 / NCPPB 4357 / Et1/99)).